Here is a 209-residue protein sequence, read N- to C-terminus: Small ribosomal subunit protein uS4 (209 aa).

The region spanning 99–161 (CRLDNIAFRL…SSKLVVVEMG (63 aa)) is the S4 RNA-binding domain.

This sequence belongs to the universal ribosomal protein uS4 family. In terms of assembly, part of the 30S ribosomal subunit. Contacts protein S5. The interaction surface between S4 and S5 is involved in control of translational fidelity.

One of the primary rRNA binding proteins, it binds directly to 16S rRNA where it nucleates assembly of the body of the 30S subunit. Its function is as follows. With S5 and S12 plays an important role in translational accuracy. In Acidobacterium capsulatum (strain ATCC 51196 / DSM 11244 / BCRC 80197 / JCM 7670 / NBRC 15755 / NCIMB 13165 / 161), this protein is Small ribosomal subunit protein uS4.